Consider the following 926-residue polypeptide: Vacuolar protein sorting-associated protein 39 homolog (926 aa).

In terms of domain architecture, CNH spans 15–306 (PVEVTCLAFQ…MTLCSGARGQ (292 aa)). Residues 590–768 (DETEMARNLN…LFRTLVHPNQ (179 aa)) form a CHCR repeat.

The protein belongs to the VAM6/VPS39 family. Probable core component of the homotypic fusion and vacuole protein sorting (HOPS) complex consisting of the core class C Vps proteins vps-11, vps-16, vps-18, and which further associates with vps-33.1, vps-39 and vps-41. May interact with lgg-2. Interacts with cuti-1.

It localises to the cytoplasm. The protein localises to the lysosome membrane. It is found in the late endosome membrane. Its subcellular location is the late endosome. The protein resides in the lysosome. Its function is as follows. Plays a role in vesicle-mediated protein trafficking to lysosomal compartments including the endocytic membrane transport and autophagic pathways. Believed to act in part as a component of the putative HOPS endosomal tethering complex which is proposed to be involved in the rab-5-to-rab-7 endosome conversion probably implicating sand-1, and via binding SNAREs and SNARE complexes to mediate tethering and docking events during SNARE-mediated membrane fusion. The HOPS complex is proposed to be recruited to rab-7 on the late endosomal membrane and to regulate late endocytic, phagocytic and autophagic traffic towards lysosomes. Involved in homotypic vesicle fusions between late endosomes and in heterotypic fusions between late endosomes and lysosomes. Required for fusion of endosomes. In association with lgg-2 mediates the tethering of autophagosomes with lysosomes to form autolysosomes. Within the HOPS complex, contributes to the normal development of gut granules in embryonic and adult intestinal cells. The polypeptide is Vacuolar protein sorting-associated protein 39 homolog (Caenorhabditis elegans).